We begin with the raw amino-acid sequence, 93 residues long: Cell division topological specificity factor (93 aa).

Belongs to the MinE family.

Prevents the cell division inhibition by proteins MinC and MinD at internal division sites while permitting inhibition at polar sites. This ensures cell division at the proper site by restricting the formation of a division septum at the midpoint of the long axis of the cell. The sequence is that of Cell division topological specificity factor from Agathobacter rectalis (strain ATCC 33656 / DSM 3377 / JCM 17463 / KCTC 5835 / VPI 0990) (Eubacterium rectale).